Reading from the N-terminus, the 258-residue chain is Acyl-[acyl-carrier-protein]--UDP-N-acetylglucosamine O-acyltransferase (258 aa).

The protein belongs to the transferase hexapeptide repeat family. LpxA subfamily. As to quaternary structure, homotrimer.

The protein localises to the cytoplasm. It carries out the reaction a (3R)-hydroxyacyl-[ACP] + UDP-N-acetyl-alpha-D-glucosamine = a UDP-3-O-[(3R)-3-hydroxyacyl]-N-acetyl-alpha-D-glucosamine + holo-[ACP]. It functions in the pathway glycolipid biosynthesis; lipid IV(A) biosynthesis; lipid IV(A) from (3R)-3-hydroxytetradecanoyl-[acyl-carrier-protein] and UDP-N-acetyl-alpha-D-glucosamine: step 1/6. Its function is as follows. Involved in the biosynthesis of lipid A, a phosphorylated glycolipid that anchors the lipopolysaccharide to the outer membrane of the cell. In Pseudomonas putida (strain ATCC 47054 / DSM 6125 / CFBP 8728 / NCIMB 11950 / KT2440), this protein is Acyl-[acyl-carrier-protein]--UDP-N-acetylglucosamine O-acyltransferase.